A 289-amino-acid chain; its full sequence is Elongation factor Ts (289 aa).

The interval 82–85 (TDFL) is involved in Mg(2+) ion dislocation from EF-Tu.

This sequence belongs to the EF-Ts family.

The protein resides in the cytoplasm. Associates with the EF-Tu.GDP complex and induces the exchange of GDP to GTP. It remains bound to the aminoacyl-tRNA.EF-Tu.GTP complex up to the GTP hydrolysis stage on the ribosome. The sequence is that of Elongation factor Ts from Pseudomonas paraeruginosa (strain DSM 24068 / PA7) (Pseudomonas aeruginosa (strain PA7)).